A 449-amino-acid chain; its full sequence is tRNA-2-methylthio-N(6)-dimethylallyladenosine synthase (449 aa).

Residues 3–124 (KMLYIKTYGC…LPTMLEKLDS (122 aa)) form the MTTase N-terminal domain. [4Fe-4S] cluster is bound by residues C12, C48, C87, C163, C167, and C170. Positions 149 to 380 (KSPTVSGLVS…QAQLMQQQLE (232 aa)) constitute a Radical SAM core domain. The 65-residue stretch at 383–447 (QKLIGKVVPV…ASSLFGEVYA (65 aa)) folds into the TRAM domain.

It belongs to the methylthiotransferase family. MiaB subfamily. As to quaternary structure, monomer. [4Fe-4S] cluster serves as cofactor.

The protein resides in the cytoplasm. The catalysed reaction is N(6)-dimethylallyladenosine(37) in tRNA + (sulfur carrier)-SH + AH2 + 2 S-adenosyl-L-methionine = 2-methylsulfanyl-N(6)-dimethylallyladenosine(37) in tRNA + (sulfur carrier)-H + 5'-deoxyadenosine + L-methionine + A + S-adenosyl-L-homocysteine + 2 H(+). In terms of biological role, catalyzes the methylthiolation of N6-(dimethylallyl)adenosine (i(6)A), leading to the formation of 2-methylthio-N6-(dimethylallyl)adenosine (ms(2)i(6)A) at position 37 in tRNAs that read codons beginning with uridine. This is tRNA-2-methylthio-N(6)-dimethylallyladenosine synthase from Orientia tsutsugamushi (strain Ikeda) (Rickettsia tsutsugamushi).